Consider the following 166-residue polypeptide: Cytochrome c-550 2 (166 aa).

A signal peptide spans 1–32 (MFSRQFGRLATLALALAVAGCAGGEQSTTAEA). Cysteine 71, cysteine 74, and histidine 75 together coordinate heme c.

Belongs to the cytochrome c family. PsbV subfamily. Heme c is required as a cofactor.

Its subcellular location is the cell inner membrane. Its function is as follows. Probable low-potential cytochrome c, might function in photosystem II (PSII). This is Cytochrome c-550 2 (psbV2) from Gloeobacter violaceus (strain ATCC 29082 / PCC 7421).